Reading from the N-terminus, the 314-residue chain is MAGNSQRRGAVRKAGTKKGPQVGSGGVRRRGLEGRGATPPAHERPHHPAGKRAAKAARQAQGRHKKTDDTEIVLGRNPVVECLRAGVPATALYVALGTDADERLTESVQMAADRGISILEVQRHDLDRMAANGLHQGIALQVPPYAYAHPDDLLRDAKSDAAPALLVALDNISDPRNLGAIVRSVAAFGGHGVVLPQRRSASVTAVAWRTSAGAAARTPVARATNLNRTLKQYADAGLQVVGLDAGGDTTIDEIDGLTPTIVVVGSEGKGLSRLVRENCDRIVSIPMAGPTESLNASVAAGVVLAEIARQRRLS.

The tract at residues 1 to 70 (MAGNSQRRGA…QGRHKKTDDT (70 aa)) is disordered. Basic residues predominate over residues 44 to 65 (RPHHPAGKRAAKAARQAQGRHK). The S-adenosyl-L-methionine site is built by G265, I285, and L294.

This sequence belongs to the class IV-like SAM-binding methyltransferase superfamily. RNA methyltransferase TrmH family.

This is an uncharacterized protein from Mycolicibacterium gilvum (strain PYR-GCK) (Mycobacterium gilvum (strain PYR-GCK)).